The primary structure comprises 274 residues: 2,3,4,5-tetrahydropyridine-2,6-dicarboxylate N-succinyltransferase (274 aa).

2 residues coordinate substrate: Arg106 and Asp143.

The protein belongs to the transferase hexapeptide repeat family. As to quaternary structure, homotrimer.

The protein localises to the cytoplasm. The enzyme catalyses (S)-2,3,4,5-tetrahydrodipicolinate + succinyl-CoA + H2O = (S)-2-succinylamino-6-oxoheptanedioate + CoA. It participates in amino-acid biosynthesis; L-lysine biosynthesis via DAP pathway; LL-2,6-diaminopimelate from (S)-tetrahydrodipicolinate (succinylase route): step 1/3. The polypeptide is 2,3,4,5-tetrahydropyridine-2,6-dicarboxylate N-succinyltransferase (Cupriavidus metallidurans (strain ATCC 43123 / DSM 2839 / NBRC 102507 / CH34) (Ralstonia metallidurans)).